We begin with the raw amino-acid sequence, 362 residues long: Stress response regulator protein 1 (362 aa).

2 disordered regions span residues 1–39 (MTRL…SLVQ) and 163–188 (TLKS…ETKT). The segment covering 19–39 (PSQLLHSASLSSSPSSPSLVQ) has biased composition (low complexity). One can recognise a Response regulatory domain in the interval 209-327 (KFLLVDDNLI…LDFMANVIDE (119 aa)). At Asp260 the chain carries 4-aspartylphosphate.

In terms of biological role, required for stress adaptation, morphogenesis and virulence. The sequence is that of Stress response regulator protein 1 (SRR1) from Lodderomyces elongisporus (strain ATCC 11503 / CBS 2605 / JCM 1781 / NBRC 1676 / NRRL YB-4239) (Yeast).